The chain runs to 301 residues: MLIAGPTASGKSALALKLAQASGGTVINTDSMQVYRDLRIITARPTPDEEALAPHRLYGTVDAAVNFSAGAYVEAAAVALAEVRVAGRLPILIGGTGLYFKALTRGLSAVPPVPAEVRDAVRLRLDRDGVQALHAELAGHDPEAAARLAPADRTRIARALEVVLATGRPLADWHQQTSPPLLPPDDVVAVFLAPDREALYARIDSRFAAMLQGGALNEVAALAERQLDPLLPAMKAHGVPALIRHLRGEITLEEAASIGAADTRHYAKRQFTWFRHQLPEFKWVRPQEADAFLNTVMPGRA.

5–12 is a binding site for ATP; the sequence is GPTASGKS. 7–12 serves as a coordination point for substrate; that stretch reads TASGKS. The interaction with substrate tRNA stretch occupies residues 30 to 33; the sequence is DSMQ.

It belongs to the IPP transferase family. In terms of assembly, monomer. Requires Mg(2+) as cofactor.

The enzyme catalyses adenosine(37) in tRNA + dimethylallyl diphosphate = N(6)-dimethylallyladenosine(37) in tRNA + diphosphate. In terms of biological role, catalyzes the transfer of a dimethylallyl group onto the adenine at position 37 in tRNAs that read codons beginning with uridine, leading to the formation of N6-(dimethylallyl)adenosine (i(6)A). The sequence is that of tRNA dimethylallyltransferase from Rhodopseudomonas palustris (strain TIE-1).